The sequence spans 274 residues: MGVRKLKPVTNGTRHAILYDFAEITKSEPEKSLVEPLKKHAGRNNQGRITVRHRGGGHKRLYRIIDFKRDKWGIPAKVAAIEYDPNRSARIALLHYLDGEKRYIIWPEGLKVGDYIMAGPDAEIKVGNALPLENIPVGTLVHNIELTPGKGGQLVRAAGMSAQILGREGDYVQIRLPSGELRLVYKKCMATIGAVGLAEHELLELGKAGRSRWLGIRPTVRGTAMNPADHPHGGGEGRTFGKHPVSPWGLPTKGYKTRRGAKYSDKFIIKRRGK.

Residues arginine 221–glycine 254 are disordered.

Belongs to the universal ribosomal protein uL2 family. Part of the 50S ribosomal subunit. Forms a bridge to the 30S subunit in the 70S ribosome.

Functionally, one of the primary rRNA binding proteins. Required for association of the 30S and 50S subunits to form the 70S ribosome, for tRNA binding and peptide bond formation. It has been suggested to have peptidyltransferase activity; this is somewhat controversial. Makes several contacts with the 16S rRNA in the 70S ribosome. The chain is Large ribosomal subunit protein uL2 from Sulfurihydrogenibium sp. (strain YO3AOP1).